Consider the following 484-residue polypeptide: Nuclear rim protein 1 (484 aa).

At Ser-3 the chain carries Phosphoserine. The next 2 membrane-spanning stretches (helical) occupy residues 145–165 (FTIF…MFGY) and 237–257 (IPTN…IVFL). The segment at 416-457 (SSNENLEKGGAFLPNQDQNRPSKSLSPLRKTPLSARQKRFEG) is disordered. A Phosphoserine modification is found at Ser-417. The span at 430 to 440 (NQDQNRPSKSL) shows a compositional bias: polar residues. Ser-474 carries the post-translational modification Phosphoserine.

This sequence belongs to the NUR1 family. Interacts with CSM1.

Its subcellular location is the nucleus membrane. Member of a perinuclear network that controls recombination at multiple loci to maintain genome stability. Required for rDNA repeat stability. The protein is Nuclear rim protein 1 (NUR1) of Saccharomyces cerevisiae (strain JAY291) (Baker's yeast).